The sequence spans 309 residues: Mycothiol acetyltransferase (309 aa).

N-acetyltransferase domains follow at residues 16–158 and 166–309; these read ETLA…LDLP and VSVR…RTET. Glu47 lines the 1D-myo-inositol 2-(L-cysteinylamino)-2-deoxy-alpha-D-glucopyranoside pocket. 92–94 contacts acetyl-CoA; that stretch reads LVV. Glu193, Lys232, and Glu241 together coordinate 1D-myo-inositol 2-(L-cysteinylamino)-2-deoxy-alpha-D-glucopyranoside. Acetyl-CoA is bound by residues 245–247 and 252–258; these read LGI and QGGGLGK. Residue Tyr279 participates in 1D-myo-inositol 2-(L-cysteinylamino)-2-deoxy-alpha-D-glucopyranoside binding.

Belongs to the acetyltransferase family. MshD subfamily. In terms of assembly, monomer.

It carries out the reaction 1D-myo-inositol 2-(L-cysteinylamino)-2-deoxy-alpha-D-glucopyranoside + acetyl-CoA = mycothiol + CoA + H(+). In terms of biological role, catalyzes the transfer of acetyl from acetyl-CoA to desacetylmycothiol (Cys-GlcN-Ins) to form mycothiol. The sequence is that of Mycothiol acetyltransferase from Streptomyces coelicolor (strain ATCC BAA-471 / A3(2) / M145).